Reading from the N-terminus, the 601-residue chain is Glutathione-regulated potassium-efflux system protein KefB (601 aa).

13 helical membrane passes run 5 to 25 (SLLM…PLAA), 29 to 49 (IGAV…GLGF), 55 to 75 (EILH…GLEL), 87 to 107 (IFGV…GLLW), 115 to 135 (AAII…LQLM), 152 to 172 (VLLF…LLAG), 180 to 202 (WMKL…YLLR), 207 to 227 (FIAA…LVLG), 230 to 250 (LFME…GILL), 268 to 288 (GLLL…GVLY), 291 to 311 (ILEI…VLYL), 324 to 344 (LQFS…FSAA), and 356 to 376 (PLLL…MQGV). In terms of domain architecture, RCK N-terminal spans 400–519 (KPQVIVVGFG…AGVTQFSRET (120 aa)).

Belongs to the monovalent cation:proton antiporter 2 (CPA2) transporter (TC 2.A.37) family. KefB subfamily. As to quaternary structure, interacts with the regulatory subunit KefG.

The protein resides in the cell inner membrane. Pore-forming subunit of a potassium efflux system that confers protection against electrophiles. Catalyzes K(+)/H(+) antiport. The protein is Glutathione-regulated potassium-efflux system protein KefB of Erwinia tasmaniensis (strain DSM 17950 / CFBP 7177 / CIP 109463 / NCPPB 4357 / Et1/99).